A 577-amino-acid polypeptide reads, in one-letter code: MALHHLRHAPLALRLARLPRLAPSPPPPAARLLLLLAPSQHPAPPWRLLSRPRALATAAAEADDAGAGGNGDGDGFFSEESTSWESLGVSDRLASALHGAGLARPSLVQAACIPHVLTTNDVIVAAETGSGKTHGYLVPLIEKLCSKSISAEDGNSQDVTSGSPNIALVLCPNVMLCEQVVRMANSLVDESGEPLKSAAAVCGPKGWPTVRPDILVATPAALLNYLFDYDPEKRRRERFLRNVKFIVFDEADMLLCGSFENQVIRLIHMLRFDEKLLSRMEDSGKEISLGDTNEYREDSDSQSAELSADDEENEDGLVQHRPVNVENAHIGAHKKDWRRVRKVYRRSKQYVFVAATLPQSGKKTAGGVLKRMFPNAVWVSGAYLHRHNPRLERRWIEVTADTQVSALLDAVKYGLKNEVHDTKLGPNRTMVFTNTVDAANSVSDILQRVGVPCILYHRDSSLEERAKNLQSFRENGGVLVCTDAAARGLDVPNVSHVIQAEFAACAVDFLHRVGRTARAGQSGIVTSLYTEANRDLVRAVRQAEELAQPVEKAFSRKRSFRNKLKKQALHKSTALLS.

The Q motif signature appears at 82-110; sequence TSWESLGVSDRLASALHGAGLARPSLVQA. One can recognise a Helicase ATP-binding domain in the interval 113–375; that stretch reads IPHVLTTNDV…GGVLKRMFPN (263 aa). 126–133 is a binding site for ATP; that stretch reads AETGSGKT. The DEAD box signature appears at 249–252; it reads DEAD. Residues 288–317 are disordered; that stretch reads SLGDTNEYREDSDSQSAELSADDEENEDGL. The region spanning 407–568 is the Helicase C-terminal domain; the sequence is LLDAVKYGLK…SFRNKLKKQA (162 aa).

Belongs to the DEAD box helicase family.

The enzyme catalyses ATP + H2O = ADP + phosphate + H(+). This chain is DEAD-box ATP-dependent RNA helicase 22, found in Oryza sativa subsp. japonica (Rice).